Here is a 190-residue protein sequence, read N- to C-terminus: Xanthine phosphoribosyltransferase (190 aa).

Positions 20 and 27 each coordinate xanthine. 5-phospho-alpha-D-ribose 1-diphosphate is bound at residue 129-133; it reads ANGRA. Position 157 (Lys157) interacts with xanthine.

This sequence belongs to the purine/pyrimidine phosphoribosyltransferase family. Xpt subfamily. In terms of assembly, homodimer.

It is found in the cytoplasm. It catalyses the reaction XMP + diphosphate = xanthine + 5-phospho-alpha-D-ribose 1-diphosphate. The protein operates within purine metabolism; XMP biosynthesis via salvage pathway; XMP from xanthine: step 1/1. Functionally, converts the preformed base xanthine, a product of nucleic acid breakdown, to xanthosine 5'-monophosphate (XMP), so it can be reused for RNA or DNA synthesis. The polypeptide is Xanthine phosphoribosyltransferase (Clostridioides difficile (strain 630) (Peptoclostridium difficile)).